The sequence spans 148 residues: SPbeta prophage-derived disulfide bond formation protein B (148 aa).

Residues 7-26 (KSFFLLLFFLSFFGTMASLF) form a helical membrane-spanning segment. Cys-36 and Cys-39 are joined by a disulfide. 2 consecutive transmembrane segments (helical) span residues 41 to 60 (YQRI…LLKK) and 67 to 84 (YVVF…YHYI). Cys-95 and Cys-102 are oxidised to a cystine. The helical transmembrane segment at 111-135 (GFITLPLMSSVCFALIFGIGLKLII) threads the bilayer.

It belongs to the DsbB family. BdbC subfamily.

Its subcellular location is the cell membrane. Important but not absolutely essential for the production of the lantibiotic sublancin 168, it may also be required for the stability of other secreted proteins. Not required for competence for DNA uptake. This is SPbeta prophage-derived disulfide bond formation protein B (bdbB) from Bacillus subtilis (strain 168).